A 187-amino-acid chain; its full sequence is Elongation factor P (187 aa).

This sequence belongs to the elongation factor P family.

The protein resides in the cytoplasm. Its pathway is protein biosynthesis; polypeptide chain elongation. Functionally, involved in peptide bond synthesis. Stimulates efficient translation and peptide-bond synthesis on native or reconstituted 70S ribosomes in vitro. Probably functions indirectly by altering the affinity of the ribosome for aminoacyl-tRNA, thus increasing their reactivity as acceptors for peptidyl transferase. This chain is Elongation factor P, found in Prochlorococcus marinus (strain NATL2A).